Reading from the N-terminus, the 135-residue chain is Small ribosomal subunit protein eS6 (135 aa).

The protein belongs to the eukaryotic ribosomal protein eS6 family.

The chain is Small ribosomal subunit protein eS6 from Methanococcoides burtonii (strain DSM 6242 / NBRC 107633 / OCM 468 / ACE-M).